We begin with the raw amino-acid sequence, 234 residues long: Bromodomain-containing protein DDB_G0271118 (234 aa).

In terms of domain architecture, Bromo spans 1–60; the sequence is MDLGTIKGELDNNGYSTIKDFTADVRLMFENALTYNADSSPIWKHAKTLLYFHRKHDEHV. The segment covering 134–194 has biased composition (low complexity); sequence NNNSNNNNNN…SSSSSSSSSS (61 aa). Positions 134 to 209 are disordered; sequence NNNSNNNNNN…KKYSDEERRN (76 aa).

The sequence is that of Bromodomain-containing protein DDB_G0271118 from Dictyostelium discoideum (Social amoeba).